Reading from the N-terminus, the 229-residue chain is Urease accessory protein UreF (229 aa).

Belongs to the UreF family. UreD, UreF and UreG form a complex that acts as a GTP-hydrolysis-dependent molecular chaperone, activating the urease apoprotein by helping to assemble the nickel containing metallocenter of UreC. The UreE protein probably delivers the nickel.

It localises to the cytoplasm. Its function is as follows. Required for maturation of urease via the functional incorporation of the urease nickel metallocenter. The chain is Urease accessory protein UreF from Trichormus variabilis (strain ATCC 29413 / PCC 7937) (Anabaena variabilis).